The primary structure comprises 119 residues: Gas vesicle protein O1 (119 aa).

Residues 1-12 (MADPANDRSERE) show a composition bias toward basic and acidic residues. Positions 1–48 (MADPANDRSEREEGGEDDETPPASDGNPSPSANSFTLSNAQTRAREAA) are disordered. Over residues 26–42 (GNPSPSANSFTLSNAQT) the composition is skewed to polar residues.

It belongs to the gas vesicle GvpO family. As to quaternary structure, forms homodimers, forms a GvpN1-GvpO1 heterodimer, interacts with GvpC1 (via the latter's C-terminus), GvpF1, GvpI1 and GvpL1, might interact with GvpA1.

The protein resides in the gas vesicle. It is found in the cytoplasm. Functionally, a minor component of the gas vesicle, also found in soluble extracts. May play a role in transcription and/or RNA stability and in GV assembly. Gas vesicles are hollow, gas filled proteinaceous nanostructures found in several microbial planktonic microorganisms. They allow positioning of halobacteria at the optimal depth for growth in the poorly aerated, shallow brine pools of their habitat. In terms of biological role, expression of a 9.5 kb p-vac DNA fragment containing 2 divergently transcribed regions (gvpD-gvpE-gvpF-gvpG-gvpH-gvpI-gvpJ-gvpK-gvpL-gvpM and gvpA-gvpC-gvpN-gvpO) allows H.volcanii to produce gas vesicles. A minimal gas vesicle can be made in H.volcanii by gvpA1-gvpO1 gvpF1-gvpG1-gvpJ1-gvpK1-gvpL1-gvpM1; lack of enough GvpJ1 prevents formation. The same region restores gas vesicle production in H.halobium without the p-vac locus, but it still has the c-vac locus. This Halobacterium salinarum (strain ATCC 700922 / JCM 11081 / NRC-1) (Halobacterium halobium) protein is Gas vesicle protein O1.